Consider the following 367-residue polypeptide: Tetraprenyl-beta-curcumene synthase (367 aa).

This sequence belongs to the large terpene synthase family.

The enzyme catalyses all-trans-heptaprenyl diphosphate = (R)-tetraprenyl-beta-curcumene + diphosphate. In terms of biological role, catalyzes the transformation of a linear C35 prenyl diphosphate chain to form tetraprenyl-beta-curcumene. This is Tetraprenyl-beta-curcumene synthase (ytpB) from Bacillus subtilis (strain 168).